The primary structure comprises 125 residues: Glycine cleavage system H protein (125 aa).

In terms of domain architecture, Lipoyl-binding spans S21–K103. Position 62 is an N6-lipoyllysine (K62).

It belongs to the GcvH family. In terms of assembly, the glycine cleavage system is composed of four proteins: P, T, L and H. (R)-lipoate is required as a cofactor.

In terms of biological role, the glycine cleavage system catalyzes the degradation of glycine. The H protein shuttles the methylamine group of glycine from the P protein to the T protein. The sequence is that of Glycine cleavage system H protein from Psychromonas ingrahamii (strain DSM 17664 / CCUG 51855 / 37).